The primary structure comprises 113 residues: Iron-sulfur cluster insertion protein ErpA (113 aa).

Residues cysteine 41, cysteine 105, and cysteine 107 each coordinate iron-sulfur cluster.

Belongs to the HesB/IscA family. In terms of assembly, homodimer. Iron-sulfur cluster is required as a cofactor.

Required for insertion of 4Fe-4S clusters for at least IspG. This Hydrogenovibrio crunogenus (strain DSM 25203 / XCL-2) (Thiomicrospira crunogena) protein is Iron-sulfur cluster insertion protein ErpA.